Here is a 255-residue protein sequence, read N- to C-terminus: Glutamate racemase (255 aa).

Substrate is bound by residues 7–8 and 39–40; these read DS and YG. Residue Cys-70 is the Proton donor/acceptor of the active site. Residue 71–72 coordinates substrate; sequence NT. Residue Cys-181 is the Proton donor/acceptor of the active site. 182-183 contributes to the substrate binding site; that stretch reads TH.

This sequence belongs to the aspartate/glutamate racemases family.

The enzyme catalyses L-glutamate = D-glutamate. It functions in the pathway cell wall biogenesis; peptidoglycan biosynthesis. Its function is as follows. Provides the (R)-glutamate required for cell wall biosynthesis. In Helicobacter pylori (strain Shi470), this protein is Glutamate racemase.